A 442-amino-acid chain; its full sequence is MKPGPPRRGTAQGQRVDTATHAPGARGLLLPPLLLLLLAGRAAGAQRWRNENFERPVDLEGSGDDDSFPDDELDDLYSGSGSGYFEQESGLETAMRFIPDMALAAPTAPAMLPTTVIQPVDTPFEELLSEHPSPEPVTSPPLVTEVTEVVEESSQKATTISTTTSTTAATTTGAPTMATAPATAATTAPSTPEAPPATATVADVRTTGIQGMLPLPLTTAATAKITTPAAPSPPTTVATLDTEAPTPRLVNTATSRPRALPRPVTTQEPDVAERSTLPLGTTAPGPTEMAQTPTPESLLTTIQDEPEVPVSGGPSGDFELQEETTQPDTANEVVAVEGAAAKPSPPLGTLPKGARPGPGLHDNAIDSGSSAAQLPQKSILERKEVLVAVIVGGVVGALFAAFLVTLLIYRMKKKDEGSYTLEEPKQASVTYQKPDKQEEFYA.

2 disordered regions span residues 1–25 (MKPG…APGA) and 47–80 (RWRN…YSGS). Positions 1 to 44 (MKPGPPRRGTAQGQRVDTATHAPGARGLLLPPLLLLLLAGRAAG) are cleaved as a signal peptide. Residues 45–387 (AQRWRNENFE…SILERKEVLV (343 aa)) are Extracellular-facing. Residues 48 to 58 (WRNENFERPVD) are compositionally biased toward basic and acidic residues. A compositionally biased stretch (acidic residues) spans 61–75 (GSGDDDSFPDDELDD). O-linked (Xyl...) (glycosaminoglycan) serine glycosylation is found at Ser-78, Ser-80, Ser-82, and Ser-89. Thr-107 carries an O-linked (GalNAc) threonine; by GALNT13 glycan. Disordered stretches follow at residues 152-199 (ESSQ…PATA), 253-293 (ATSR…AQTP), and 305-327 (EPEV…TTQP). Composition is skewed to low complexity over residues 157–199 (ATTI…PATA) and 276–287 (TLPLGTTAPGPT). Residue Ser-161 is glycosylated (O-linked (GalNAc) serine; by GALNT13). 4 O-linked (GalNAc) threonine; by GALNT13 glycosylation sites follow: Thr-162, Thr-163, Thr-170, and Thr-172. O-linked (Xyl...) (glycosaminoglycan) serine glycosylation is found at Ser-315 and Ser-367. A helical transmembrane segment spans residues 388–408 (AVIVGGVVGALFAAFLVTLLI). Tyr-409, Tyr-419, Tyr-431, and Tyr-441 each carry phosphotyrosine. Residues 409–442 (YRMKKKDEGSYTLEEPKQASVTYQKPDKQEEFYA) lie on the Cytoplasmic side of the membrane. Residues 419–442 (YTLEEPKQASVTYQKPDKQEEFYA) form a disordered region. Basic and acidic residues predominate over residues 433–442 (KPDKQEEFYA).

The protein belongs to the syndecan proteoglycan family. Interacts with TIAM1. Interacts with PTN (via heparan sulfate chains); this interaction mediates the neurite outgrowth-promoting signal from PTN to the cytoskeleton of growing neurites; this interaction mediates osteoblast recruitment. Interacts with MDK; this interaction induces SDC3 clustering; this interaction induces neuronal cell adhesion and neurite outgrowth. O-glycosylated within the Thr/Ser-rich region which could interact with lectin domains on other molecules.

Its subcellular location is the cell membrane. Cell surface proteoglycan that may bear heparan sulfate. May have a role in the organization of cell shape by affecting the actin cytoskeleton, possibly by transferring signals from the cell surface in a sugar-dependent mechanism. The protein is Syndecan-3 (Sdc3) of Mus musculus (Mouse).